The sequence spans 401 residues: Chalcone synthase 6 (401 aa).

The active site involves Cys168.

It belongs to the thiolase-like superfamily. Chalcone/stilbene synthases family.

It catalyses the reaction (E)-4-coumaroyl-CoA + 3 malonyl-CoA + 3 H(+) = 2',4,4',6'-tetrahydroxychalcone + 3 CO2 + 4 CoA. It functions in the pathway secondary metabolite biosynthesis; flavonoid biosynthesis. In terms of biological role, the primary product of this enzyme is 4,2',4',6'-tetrahydroxychalcone (also termed naringenin-chalcone or chalcone) which can under specific conditions spontaneously isomerize into naringenin. This chain is Chalcone synthase 6 (CHS6), found in Sorghum bicolor (Sorghum).